Consider the following 124-residue polypeptide: Putative B3 domain-containing protein At1g51970 (124 aa).

Residues 18 to 124 (VLKKNLTESD…SRRFLFHHIN (107 aa)) constitute a DNA-binding region (TF-B3).

Its subcellular location is the nucleus. This Arabidopsis thaliana (Mouse-ear cress) protein is Putative B3 domain-containing protein At1g51970.